A 384-amino-acid chain; its full sequence is Sensor-like histidine kinase SenX3 (384 aa).

Residues N153 to P369 form the Histidine kinase domain. Position 156 is a phosphohistidine; by autocatalysis (H156). The segment at T360–R384 is disordered. The span at P371–R384 shows a compositional bias: basic and acidic residues.

Autophosphorylated.

Its subcellular location is the cell membrane. It carries out the reaction ATP + protein L-histidine = ADP + protein N-phospho-L-histidine.. Its function is as follows. Member of the two-component regulatory system SenX3/RegX3 involved in stress response. The system is involved in phosphate starvation response. Probably exhibits a dual role as a phosphatase or a phosphodonor for the response regulator RegX3, depending upon phosphate availability. When environmental phosphate is abundant, SenX3 is required to maintain RegX3 in an unphosphorylated state, where it is unable to bind target DNA. Under conditions of phosphate limitation, SenX3 autophosphorylates and then transfers the phosphate group to RegX3. Probably does not itself sense phosphate concentrations, which may be relayed to SenX3 by the PstSCAB phosphate transporter system. This chain is Sensor-like histidine kinase SenX3, found in Mycolicibacterium smegmatis (strain ATCC 700084 / mc(2)155) (Mycobacterium smegmatis).